The primary structure comprises 124 residues: Putative C(50) carotenoid beta-cyclase subunit A (124 aa).

The next 3 membrane-spanning stretches (helical) occupy residues 1–21, 34–54, and 78–98; these read MIGLSYLLVQVVSFAGILVID, AAALAVTASVALLLTWDVLGV, and FEEVVFLAFLSHLALVCAAGV.

It belongs to the lycopene beta-cyclase family. As to quaternary structure, may form a complex with LbtBC.

It is found in the cell membrane. Its pathway is carotenoid biosynthesis. Involved in the biosynthesis of C(50) beta-cyclic carotenoids. May have C(50) carotenoid beta-cyclase activity and produce the C(50) beta-cyclic carotenoid C.p.450 from the C(50) carotenoid dihydrobisanhydrobacterioruberin (DH-BABR). The chain is Putative C(50) carotenoid beta-cyclase subunit A from Dietzia sp. (strain CQ4).